The chain runs to 912 residues: Ubiquitin carboxyl-terminal hydrolase 20 (912 aa).

The segment at 6-111 (DLCPHLDSIG…GPAPKFSEQD (106 aa)) adopts a UBP-type zinc-finger fold. Zn(2+)-binding residues include C8, H10, C30, C33, C43, C48, C53, H60, H64, H70, C83, and C86. Residues 101–120 (PGPAPKFSEQDSPPPSHPLK) are disordered. Phosphoserine occurs at positions 112, 132, and 134. The 539-residue stretch at 145 to 683 (TGMKNLGNSC…EAYVLFYRKS (539 aa)) folds into the USP domain. C154 serves as the catalytic Nucleophile. Disordered stretches follow at residues 258–308 (LTEA…GSQA) and 322–415 (ISEK…ASPV). The residue at position 259 (T259) is a Phosphothreonine. Positions 260-280 (EARDSDSSDTDEKREGDRSPS) are enriched in basic and acidic residues. S306 is subject to Phosphoserine. Positions 322–333 (ISEKERMKDRKF) are enriched in basic and acidic residues. At S369 the chain carries Phosphoserine. The residue at position 378 (T378) is a Phosphothreonine. A phosphoserine mark is found at S408 and S413. H641 (proton acceptor) is an active-site residue. 2 consecutive DUSP domains span residues 685–778 (EEAV…LYVC) and 787–890 (ALAK…RQSV).

It belongs to the peptidase C19 family. USP20/USP33 subfamily. As to quaternary structure, interacts with VHL, leading to its ubiquitination and subsequent degradation. Interacts with CCP110. Interacts with DIO2. Interacts with HIF1A. Interacts with ADRB2. Interacts with USP18. Ubiquitinated via a VHL-dependent pathway for proteasomal degradation.

The protein localises to the cytoplasm. The protein resides in the endoplasmic reticulum. It localises to the perinuclear region. It is found in the cytoskeleton. Its subcellular location is the microtubule organizing center. The protein localises to the centrosome. The catalysed reaction is Thiol-dependent hydrolysis of ester, thioester, amide, peptide and isopeptide bonds formed by the C-terminal Gly of ubiquitin (a 76-residue protein attached to proteins as an intracellular targeting signal).. Its function is as follows. Deubiquitinating enzyme that plays a role in many cellular processes including autophagy, cellular antiviral response or membrane protein biogenesis. Attenuates TLR4-mediated NF-kappa-B signaling by cooperating with beta-arrestin-2/ARRB2 and inhibiting TRAF6 autoubiquitination. Promotes cellular antiviral responses by deconjugating 'Lys-33' and 'Lys-48'-linked ubiquitination of STING1 leading to its stabilization. Plays an essential role in autophagy induction by regulating the ULK1 stability through deubiquitination of ULK1. Acts as a positive regulator for NF-kappa-B activation by TNF-alpha through deubiquitinating 'Lys-48'-linked polyubiquitination of SQSTM1, leading to its increased stability. Acts as a regulator of G-protein coupled receptor (GPCR) signaling by mediating the deubiquitination beta-2 adrenergic receptor (ADRB2). Plays a central role in ADRB2 recycling and resensitization after prolonged agonist stimulation by constitutively binding ADRB2, mediating deubiquitination of ADRB2 and inhibiting lysosomal trafficking of ADRB2. Upon dissociation, it is probably transferred to the translocated beta-arrestins, possibly leading to beta-arrestins deubiquitination and disengagement from ADRB2. This suggests the existence of a dynamic exchange between the ADRB2 and beta-arrestins. Deubiquitinates DIO2, thereby regulating thyroid hormone regulation. Deubiquitinates HIF1A, leading to stabilize HIF1A and enhance HIF1A-mediated activity. Deubiquitinates MCL1, a pivotal member of the anti-apoptotic Bcl-2 protein family to regulate its stability. Within the endoplasmic reticulum, participates with USP33 in the rescue of post-translationally targeted membrane proteins that are inappropriately ubiquitinated by the cytosolic protein quality control in the cytosol. The protein is Ubiquitin carboxyl-terminal hydrolase 20 (USP20) of Bos taurus (Bovine).